A 678-amino-acid polypeptide reads, in one-letter code: Putative cyclic nucleotide-gated ion channel 15 (678 aa).

Residues 1–81 (MGYGNSRSVR…RGQTIRRWNK (81 aa)) lie on the Cytoplasmic side of the membrane. The helical transmembrane segment at 82 to 102 (IFLIACLVSLFVDPLFFFLPV) threads the bilayer. The Extracellular portion of the chain corresponds to 103-115 (MRNEACITIGVRL). A helical membrane pass occupies residues 116 to 136 (EVVLTLIRSLADAFYIAQILI). Residues 137 to 170 (RFRTAYIAPPSRVFGRGELVIDSRKIAWRYLHKS) lie on the Cytoplasmic side of the membrane. Residues 171–191 (FWIHLVAALPLPQVLIWIIIP) form a helical membrane-spanning segment. Topologically, residues 192-203 (NLRGSPMTNTKN) are extracellular. The chain crosses the membrane as a helical span at residues 204 to 224 (VLRFIIIFQYVPRMFLIFPLS). The Cytoplasmic segment spans residues 225–245 (RQIIKATGVVTETAWAGAAYN). Residues 246 to 266 (LMLYMLASHVLGACWYLLAVE) traverse the membrane as a helical segment. Residues 267-364 (RQEACWRHAC…GQNLATSTYA (98 aa)) lie on the Extracellular side of the membrane. The chain crosses the membrane as a helical span at residues 365 to 385 (GEILFAIIIATLGLVLFALLI). Topologically, residues 386–678 (GNMQTYLQST…KPVEPDFSSE (293 aa)) are cytoplasmic. A nucleoside 3',5'-cyclic phosphate-binding positions include 471–595 (LFDQ…TKQL) and E542. Residues 587 to 602 (FRRLHTKQLRHKFRFY) are calmodulin-binding. The 32-residue stretch at 607–638 (RTWAACFIQAAWRRHRKRKYKTELRAKEEFHY) folds into the IQ domain. The segment covering 656–668 (RSGSDSGMMSSIQ) has biased composition (polar residues). The segment at 656-678 (RSGSDSGMMSSIQKPVEPDFSSE) is disordered.

It belongs to the cyclic nucleotide-gated cation channel (TC 1.A.1.5) family. In terms of assembly, homotetramer or heterotetramer.

Its subcellular location is the cell membrane. Functionally, putative cyclic nucleotide-gated ion channel. This is Putative cyclic nucleotide-gated ion channel 15 (CNGC15) from Arabidopsis thaliana (Mouse-ear cress).